Consider the following 98-residue polypeptide: Co-chaperonin GroES (98 aa).

It belongs to the GroES chaperonin family. In terms of assembly, heptamer of 7 subunits arranged in a ring. Interacts with the chaperonin GroEL.

The protein resides in the cytoplasm. Together with the chaperonin GroEL, plays an essential role in assisting protein folding. The GroEL-GroES system forms a nano-cage that allows encapsulation of the non-native substrate proteins and provides a physical environment optimized to promote and accelerate protein folding. GroES binds to the apical surface of the GroEL ring, thereby capping the opening of the GroEL channel. The sequence is that of Co-chaperonin GroES from Kineococcus radiotolerans (strain ATCC BAA-149 / DSM 14245 / SRS30216).